A 599-amino-acid chain; its full sequence is UvrABC system protein C (599 aa).

The 79-residue stretch at 15-93 (DNPGVYQYYD…IKTLQPRYNI (79 aa)) folds into the GIY-YIG domain. In terms of domain architecture, UVR spans 207 to 242 (KDSMKDFKKVMTNLAQNMHFEEAQKIKEKIEILENY).

The protein belongs to the UvrC family. As to quaternary structure, interacts with UvrB in an incision complex.

The protein localises to the cytoplasm. In terms of biological role, the UvrABC repair system catalyzes the recognition and processing of DNA lesions. UvrC both incises the 5' and 3' sides of the lesion. The N-terminal half is responsible for the 3' incision and the C-terminal half is responsible for the 5' incision. The sequence is that of UvrABC system protein C from Flavobacterium psychrophilum (strain ATCC 49511 / DSM 21280 / CIP 103535 / JIP02/86).